Reading from the N-terminus, the 1938-residue chain is Myosin-1 (1938 aa).

Residues 33–82 (DAKTSVFVADPKESFVKATVQSREGGKVTAKTEAGATVTVKEDQVFPMNP) enclose the Myosin N-terminal SH3-like domain. A phosphothreonine mark is found at T64 and T69. A Myosin motor domain is found at 86–781 (DKIEDMAMMT…LLGLLEEMRD (696 aa)). Residue K130 is modified to N6,N6,N6-trimethyllysine. An ATP-binding site is contributed by 179-186 (GESGAGKT). Y389 carries the post-translational modification Phosphotyrosine. T419 is modified (phosphothreonine). Y424 carries the phosphotyrosine modification. At S625 the chain carries Phosphoserine. Positions 658–680 (LNKLMTNLRSTHPHFVRCIIPNE) are actin-binding. H756 bears the Pros-methylhistidine mark. The segment at 760 to 774 (KFGHTKVFFKAGLLG) is actin-binding. The IQ domain maps to 784–813 (LAQLITRTQARCRGFLARVEYQKMVERRES). Positions 842–1938 (LLKSAETEKE…EVHTKIISEE (1097 aa)) form a coiled coil. 2 positions are modified to phosphoserine: S1091 and S1095. 2 disordered regions span residues 1124–1146 (EIEA…SREL) and 1152–1171 (RLEE…KKRE). Residues 1127 to 1146 (AERASRAKAEKQRSDLSREL) are compositionally biased toward basic and acidic residues. Phosphoserine occurs at positions 1161 and 1236. A Phosphothreonine modification is found at T1240. Residues S1242 and S1260 each carry the phosphoserine modification. Phosphothreonine occurs at positions 1264 and 1285. A phosphoserine mark is found at S1287, S1291, S1302, and S1305. Phosphotyrosine is present on Y1463. T1466 is subject to Phosphothreonine. At S1473 the chain carries Phosphoserine. Y1491 is modified (phosphotyrosine). S1494 carries the post-translational modification Phosphoserine. Position 1500 is a phosphothreonine (T1500). S1513 bears the Phosphoserine mark. At T1516 the chain carries Phosphothreonine. Phosphoserine occurs at positions 1541, 1553, 1573, 1599, 1602, 1713, and 1725. Phosphothreonine occurs at positions 1729 and 1735.

It belongs to the TRAFAC class myosin-kinesin ATPase superfamily. Myosin family. Muscle myosin is a hexameric protein that consists of 2 heavy chain subunits (MHC), 2 alkali light chain subunits (MLC) and 2 regulatory light chain subunits (MLC-2). Interacts with SLC26A5.

The protein resides in the cytoplasm. It is found in the myofibril. In terms of biological role, required for normal hearing. It plays a role in cochlear amplification of auditory stimuli, likely through the positive regulation of prestin (SLC26A5) activity and outer hair cell (OHC) electromotility. The sequence is that of Myosin-1 (MYH1) from Bos taurus (Bovine).